The following is a 332-amino-acid chain: Protein EXORDIUM-like 6 (332 aa).

The signal sequence occupies residues 1–27 (MAMASASSSSSSISVIIFLLLAPLCLS). 3 N-linked (GlcNAc...) asparagine glycosylation sites follow: asparagine 36, asparagine 102, and asparagine 143.

Belongs to the EXORDIUM family.

It localises to the secreted. The protein resides in the extracellular space. Its subcellular location is the apoplast. May play a role in a brassinosteroid-dependent regulation of growth and development. The polypeptide is Protein EXORDIUM-like 6 (EXL6) (Arabidopsis thaliana (Mouse-ear cress)).